Here is a 600-residue protein sequence, read N- to C-terminus: Aspartate--tRNA(Asp/Asn) ligase (600 aa).

Glu174 contributes to the L-aspartate binding site. The tract at residues 198 to 201 (QLFK) is aspartate. Residue Arg220 coordinates L-aspartate. Residues 220–222 (RDE) and Gln229 contribute to the ATP site. His457 provides a ligand contact to L-aspartate. An ATP-binding site is contributed by Glu491. Arg498 is an L-aspartate binding site. 543–546 (GLDR) serves as a coordination point for ATP.

It belongs to the class-II aminoacyl-tRNA synthetase family. Type 1 subfamily. In terms of assembly, homodimer.

It is found in the cytoplasm. The enzyme catalyses tRNA(Asx) + L-aspartate + ATP = L-aspartyl-tRNA(Asx) + AMP + diphosphate. Aspartyl-tRNA synthetase with relaxed tRNA specificity since it is able to aspartylate not only its cognate tRNA(Asp) but also tRNA(Asn). Reaction proceeds in two steps: L-aspartate is first activated by ATP to form Asp-AMP and then transferred to the acceptor end of tRNA(Asp/Asn). This Burkholderia vietnamiensis (strain G4 / LMG 22486) (Burkholderia cepacia (strain R1808)) protein is Aspartate--tRNA(Asp/Asn) ligase.